The primary structure comprises 687 residues: Protein FAR1-RELATED SEQUENCE 1 (687 aa).

In terms of domain architecture, FAR1 spans 35–137 (EFYKEYANSV…VKEHNHEIFT (103 aa)). Residues 211 to 254 (KAMHGCRPRVILTKHDQMLKEAVLEVFPSSRHCFYMWDTLGQMP) enclose the MULE domain. Residues 440 to 476 (FVVVWNSESSEVVCSCRLFELKGFLCRHAMIVLQMSG) form an SWIM-type zinc finger. The stretch at 540-562 (NVLNEALRKWENKSNLIQNLEES) forms a coiled coil.

Belongs to the FHY3/FAR1 family. As to expression, expressed in rosette and cauline leaves, inflorescences stems, flowers and siliques.

It is found in the nucleus. Its function is as follows. Putative transcription activator involved in regulating light control of development. The sequence is that of Protein FAR1-RELATED SEQUENCE 1 (FRS1) from Arabidopsis thaliana (Mouse-ear cress).